The chain runs to 373 residues: Dual-specificity RNA methyltransferase RlmN (373 aa).

Glutamate 94 serves as the catalytic Proton acceptor. The Radical SAM core domain occupies 100-339 (EDDRATLCVS…VIVRKTRGDD (240 aa)). Cysteines 107 and 344 form a disulfide. [4Fe-4S] cluster-binding residues include cysteine 114, cysteine 118, and cysteine 121. S-adenosyl-L-methionine contacts are provided by residues 168-169 (GE), serine 200, 222-224 (SIH), and asparagine 301. The active-site S-methylcysteine intermediate is the cysteine 344.

This sequence belongs to the radical SAM superfamily. RlmN family. The cofactor is [4Fe-4S] cluster.

The protein resides in the cytoplasm. It catalyses the reaction adenosine(2503) in 23S rRNA + 2 reduced [2Fe-2S]-[ferredoxin] + 2 S-adenosyl-L-methionine = 2-methyladenosine(2503) in 23S rRNA + 5'-deoxyadenosine + L-methionine + 2 oxidized [2Fe-2S]-[ferredoxin] + S-adenosyl-L-homocysteine. The enzyme catalyses adenosine(37) in tRNA + 2 reduced [2Fe-2S]-[ferredoxin] + 2 S-adenosyl-L-methionine = 2-methyladenosine(37) in tRNA + 5'-deoxyadenosine + L-methionine + 2 oxidized [2Fe-2S]-[ferredoxin] + S-adenosyl-L-homocysteine. Functionally, specifically methylates position 2 of adenine 2503 in 23S rRNA and position 2 of adenine 37 in tRNAs. m2A2503 modification seems to play a crucial role in the proofreading step occurring at the peptidyl transferase center and thus would serve to optimize ribosomal fidelity. The sequence is that of Dual-specificity RNA methyltransferase RlmN from Shewanella oneidensis (strain ATCC 700550 / JCM 31522 / CIP 106686 / LMG 19005 / NCIMB 14063 / MR-1).